Consider the following 193-residue polypeptide: Probable type II restriction enzyme HpyAORF263P (193 aa).

This sequence belongs to the BsaWI type II restriction endonuclease family.

It catalyses the reaction Endonucleolytic cleavage of DNA to give specific double-stranded fragments with terminal 5'-phosphates.. Functionally, a P subtype probable restriction enzyme that recognizes the double-stranded sequence CCGG; the cleavage site is unknown. This chain is Probable type II restriction enzyme HpyAORF263P, found in Helicobacter pylori (strain ATCC 700392 / 26695) (Campylobacter pylori).